Consider the following 505-residue polypeptide: Proton-coupled zinc antiporter SLC30A1 (505 aa).

The Cytoplasmic segment spans residues 1–10; sequence MGCWGRNRGR. A helical membrane pass occupies residues 11-31; it reads LLCMLALTFMFMVLEVVVSRV. At 32-35 the chain is on the extracellular side; the sequence is TSSL. The helical transmembrane segment at 36 to 56 threads the bilayer; that stretch reads AMLSDSFHMLSDVLALVVALV. Residues H43 and D47 each contribute to the Zn(2+) site. Over 57–80 the chain is Cytoplasmic; sequence AERFARRTHATQKNTFGWIRAEVM. Residues 81 to 101 traverse the membrane as a helical segment; sequence GALVNAIFLTGLCFAILLEAI. Residues 102-113 are Extracellular-facing; the sequence is ERFVEPHEMQQP. The chain crosses the membrane as a helical span at residues 114–134; the sequence is LVVLGVGVAGLLVNVLGLCLF. Topologically, residues 135–246 are cytoplasmic; it reads HHHSGFSQDS…RAGQLNMRGV (112 aa). Residues 142–215 are disordered; sequence QDSGHSHSHG…DPEKPRSGDT (74 aa). Over residues 187 to 199 the composition is skewed to polar residues; the sequence is TNTLVANTSNSNG. Over residues 203–214 the composition is skewed to basic and acidic residues; sequence DPADPEKPRSGD. A helical membrane pass occupies residues 247 to 267; the sequence is FLHVLGDALGSVIVVVNALVF. Zn(2+) contacts are provided by H249 and D253. At 268–306 the chain is on the extracellular side; sequence YFSWKGCSEGDFCVNPCFPDPCKAFVEIINSTHASVYEA. A glycan (N-linked (GlcNAc...) asparagine) is linked at N297. A helical membrane pass occupies residues 307–327; it reads GPCWVLYLDPTLCVVMVCILL. Residues 328-505 are Cytoplasmic-facing; that stretch reads YTTYPLLKES…MPNKQPESSL (178 aa). Position 504 is a phosphoserine (S504).

The protein belongs to the cation diffusion facilitator (CDF) transporter (TC 2.A.4) family. SLC30A subfamily. As to quaternary structure, homodimer. Interacts with TMEM163. Interacts and forms a complex with TMC6 and TMC8; the interaction regulates zinc transport into the ER.

It localises to the cell membrane. The protein resides in the basolateral cell membrane. The protein localises to the cytoplasmic vesicle membrane. It is found in the cytoplasm. Its subcellular location is the endoplasmic reticulum membrane. It localises to the golgi apparatus membrane. The protein resides in the nucleus membrane. The enzyme catalyses Zn(2+)(in) + 2 H(+)(out) = Zn(2+)(out) + 2 H(+)(in). Its function is as follows. Zinc ion:proton antiporter that could function at the plasma membrane mediating zinc efflux from cells against its electrochemical gradient protecting them from intracellular zinc accumulation and toxicity. Alternatively, could prevent the transport to the plasma membrane of CACNB2, the L-type calcium channels regulatory subunit, through a yet to be defined mechanism. By modulating the expression of these channels at the plasma membrane, could prevent calcium and zinc influx into cells. By the same mechanism, could also prevent L-type calcium channels-mediated heavy metal influx into cells. In some cells, could also function as a zinc ion:proton antiporter mediating zinc entry into the lumen of cytoplasmic vesicles. In macrophages, can increase zinc ions concentration into the lumen of cytoplasmic vesicles containing engulfed bacteria and could help inactivate them. Forms a complex with TMC6/EVER1 and TMC8/EVER2 at the ER membrane of keratynocytes which facilitates zinc uptake into the ER. Down-regulates the activity of transcription factors induced by zinc and cytokines. This is Proton-coupled zinc antiporter SLC30A1 from Macaca fascicularis (Crab-eating macaque).